Consider the following 428-residue polypeptide: Enolase (428 aa).

Gln163 is a (2R)-2-phosphoglycerate binding site. Glu205 (proton donor) is an active-site residue. The Mg(2+) site is built by Asp242, Glu285, and Asp312. The (2R)-2-phosphoglycerate site is built by Lys337, Arg366, Ser367, and Lys388. Lys337 functions as the Proton acceptor in the catalytic mechanism.

Belongs to the enolase family. Component of the RNA degradosome, a multiprotein complex involved in RNA processing and mRNA degradation. The cofactor is Mg(2+).

It is found in the cytoplasm. The protein resides in the secreted. It localises to the cell surface. The catalysed reaction is (2R)-2-phosphoglycerate = phosphoenolpyruvate + H2O. Its pathway is carbohydrate degradation; glycolysis; pyruvate from D-glyceraldehyde 3-phosphate: step 4/5. Its function is as follows. Catalyzes the reversible conversion of 2-phosphoglycerate (2-PG) into phosphoenolpyruvate (PEP). It is essential for the degradation of carbohydrates via glycolysis. This is Enolase from Halorhodospira halophila (strain DSM 244 / SL1) (Ectothiorhodospira halophila (strain DSM 244 / SL1)).